Here is a 400-residue protein sequence, read N- to C-terminus: Coenzyme A biosynthesis bifunctional protein CoaBC (400 aa).

The phosphopantothenoylcysteine decarboxylase stretch occupies residues 1 to 190 (MKLNGKHIVV…SQKQDLQGLN (190 aa)). The active-site Proton donor is the cysteine 158. The tract at residues 191–400 (VSITAGPTRE…EIIERYQKTL (210 aa)) is phosphopantothenate--cysteine ligase. CTP-binding positions include 273-275 (GCA), aspartate 279, lysine 289, 305-308 (PDII), phenylalanine 324, lysine 338, and lysine 342.

The protein in the N-terminal section; belongs to the HFCD (homo-oligomeric flavin containing Cys decarboxylase) superfamily. This sequence in the C-terminal section; belongs to the PPC synthetase family. Requires Mg(2+) as cofactor. The cofactor is FMN.

It carries out the reaction N-[(R)-4-phosphopantothenoyl]-L-cysteine + H(+) = (R)-4'-phosphopantetheine + CO2. The enzyme catalyses (R)-4'-phosphopantothenate + L-cysteine + CTP = N-[(R)-4-phosphopantothenoyl]-L-cysteine + CMP + diphosphate + H(+). The protein operates within cofactor biosynthesis; coenzyme A biosynthesis; CoA from (R)-pantothenate: step 2/5. It participates in cofactor biosynthesis; coenzyme A biosynthesis; CoA from (R)-pantothenate: step 3/5. Its function is as follows. Catalyzes two sequential steps in the biosynthesis of coenzyme A. In the first step cysteine is conjugated to 4'-phosphopantothenate to form 4-phosphopantothenoylcysteine. In the second step the latter compound is decarboxylated to form 4'-phosphopantotheine. The chain is Coenzyme A biosynthesis bifunctional protein CoaBC from Haemophilus influenzae (strain ATCC 51907 / DSM 11121 / KW20 / Rd).